The following is a 570-amino-acid chain: Proline--tRNA ligase (570 aa).

It belongs to the class-II aminoacyl-tRNA synthetase family. ProS type 1 subfamily. As to quaternary structure, homodimer.

The protein resides in the cytoplasm. It catalyses the reaction tRNA(Pro) + L-proline + ATP = L-prolyl-tRNA(Pro) + AMP + diphosphate. Its function is as follows. Catalyzes the attachment of proline to tRNA(Pro) in a two-step reaction: proline is first activated by ATP to form Pro-AMP and then transferred to the acceptor end of tRNA(Pro). As ProRS can inadvertently accommodate and process non-cognate amino acids such as alanine and cysteine, to avoid such errors it has two additional distinct editing activities against alanine. One activity is designated as 'pretransfer' editing and involves the tRNA(Pro)-independent hydrolysis of activated Ala-AMP. The other activity is designated 'posttransfer' editing and involves deacylation of mischarged Ala-tRNA(Pro). The misacylated Cys-tRNA(Pro) is not edited by ProRS. The protein is Proline--tRNA ligase of Shewanella sp. (strain ANA-3).